Reading from the N-terminus, the 202-residue chain is MTITMIDMEVYLVDENLSIKNAGLSHGYSCGCILKLDITSPKKVKMLVITKVTSFQAIQELKPLNAKLNGSDLDTELVKCYNTTTDLTVYKTSAYHRDMPDKEYCVTRIYSVMANIDSKSTIEFYGTTSDEFLSAYPVIYINPEEKYYKVKNKGRLQMRVITPILNSDKLQFMAKGDMYAGVGDDPSIVDSSDSDEETDYDY.

It belongs to the poxviridae C7 protein family.

Its function is as follows. Plays a role for multiplication of the virus in different cell types. This is Probable host range protein 2-2 from Oryctolagus cuniculus (Rabbit).